The primary structure comprises 250 residues: Flavin-dependent thymidylate synthase (250 aa).

Positions Leu7 to Thr233 constitute a ThyX domain. FAD contacts are provided by residues Ser71, Arg95–Arg97, and Gln103. Residues Glu92–Arg95, Gln103–Arg107, and Arg172 each bind dUMP. The ThyX motif signature appears at Arg95–Ser105. FAD-binding positions include Asn188 to Arg190 and His194. Arg199 serves as a coordination point for dUMP. Arg199 (involved in ionization of N3 of dUMP, leading to its activation) is an active-site residue.

It belongs to the thymidylate synthase ThyX family. Homotetramer. FAD serves as cofactor.

The enzyme catalyses dUMP + (6R)-5,10-methylene-5,6,7,8-tetrahydrofolate + NADPH + H(+) = dTMP + (6S)-5,6,7,8-tetrahydrofolate + NADP(+). It participates in pyrimidine metabolism; dTTP biosynthesis. Its function is as follows. Catalyzes the reductive methylation of 2'-deoxyuridine-5'-monophosphate (dUMP) to 2'-deoxythymidine-5'-monophosphate (dTMP) while utilizing 5,10-methylenetetrahydrofolate (mTHF) as the methyl donor, and NADPH and FADH(2) as the reductant. The protein is Flavin-dependent thymidylate synthase of Mycolicibacterium gilvum (strain PYR-GCK) (Mycobacterium gilvum (strain PYR-GCK)).